The following is a 414-amino-acid chain: 25-hydroxycholesterol 7-alpha-hydroxylase (414 aa).

A heme-binding site is contributed by cysteine 354.

This sequence belongs to the cytochrome P450 family. Requires heme as cofactor. In terms of tissue distribution, highly expressed in brain; also expressed in liver and kidney.

The protein localises to the endoplasmic reticulum membrane. The protein resides in the microsome membrane. The enzyme catalyses 25-hydroxycholesterol + reduced [NADPH--hemoprotein reductase] + O2 = 7alpha,25-dihydroxycholesterol + oxidized [NADPH--hemoprotein reductase] + H2O + H(+). It catalyses the reaction (25R)-cholest-5-ene-3beta,26-diol + reduced [NADPH--hemoprotein reductase] + O2 = (25R)-cholest-5-en-3beta,7alpha,26-triol + oxidized [NADPH--hemoprotein reductase] + H2O + H(+). The protein operates within lipid metabolism; bile acid biosynthesis. In terms of biological role, oxysterol 7alpha-hydroxylase that mediates formation of 7-alpha,25-dihydroxycholesterol (7-alpha,25-OHC) from 25-hydroxycholesterol. Plays a key role in cell positioning and movement in lymphoid tissues: 7-alpha,25-dihydroxycholesterol (7-alpha,25-OHC) acts as a ligand for the G protein-coupled receptor GPR183/EBI2, a chemotactic receptor for a number of lymphoid cells. The chain is 25-hydroxycholesterol 7-alpha-hydroxylase (Cyp7b1) from Rattus norvegicus (Rat).